Consider the following 427-residue polypeptide: Homeotic protein caudal (427 aa).

Residues 104–273 (QLMQQHHHHH…QPQPGKTRTK (170 aa)) are disordered. Over residues 116–129 (ASSSSASSGSSSSG) the composition is skewed to low complexity. A compositionally biased stretch (gly residues) spans 145 to 164 (GVGGAGGGGGVGGATDGGPG). Over residues 183–195 (ITVSGSEISSPGA) the composition is skewed to polar residues. Residues 209-243 (HLSAVANNNNNNNNNNNSPSTHNNNNNNNSVSNNN) are compositionally biased toward low complexity. Phosphothreonine is present on threonine 245. Positions 252-257 (YFDWMK) match the Antp-type hexapeptide motif. Positions 273 to 332 (KDKYRVVYTDFQRLELEKEYCTSRYITIRRKSELAQTLSLSERQVKIWFQNRRAKERKQN) form a DNA-binding region, homeobox.

Belongs to the Caudal homeobox family. As to expression, maternally localized in an anteroposterior gradient in the syncytial blastoderm. Also expressed in the pole cells. Zygotically localized in the primordia of the terminal abdominal segment, the hindgut and in the posterior midgut rudiment. Expressed in the gut, the gonads and parts of the genital disks of third instar larvae (at protein level).

The protein localises to the nucleus. Its function is as follows. Caudal (cad) is one of a number of transcription factors controlling segmentation of the embryo. Further transcriptional regulation via a 5' flanking region containing DNA replication-related elements (DRE) and by dref also regulated by trh and tgo via the CNS midline element. Alongside Bicoid (bcd), caudal forms concentration gradients down the anterior-posterior (A-P) axis providing positional information and subsequent induction of the gap genes. Plays a role in gastrulation/germ band extension, hindgut morphogenesis, positive regulation of cell proliferation, genital disk development and pattern formation. Acts as a key regulator of the Hox gene network and activates transcription via the downstream core promoter element (DPE) relative to the TATA box. Plays a role in the establishment of the hindgut and in the invagination of the hindgut primordium during gastrulation. These effects on the gut are achieved by acting combinatorially at the posterior of the embryo to activate transcription of different targets including fog, fkh and wg. Caudal is involved in regulation of proliferation through transactivation of the E2F gene. Postembryonically its function is mostly restricted to the intestine where it regulates antimicrobial peptide (AMP) levels preserving the normal gut flora. This is Homeotic protein caudal (cad) from Drosophila melanogaster (Fruit fly).